The chain runs to 282 residues: Pantothenate synthetase (282 aa).

30–37 (MGALHAGH) serves as a coordination point for ATP. The Proton donor role is filled by His-37. Gln-61 is a binding site for (R)-pantoate. Gln-61 provides a ligand contact to beta-alanine. 147 to 150 (GEKD) lines the ATP pocket. Gln-153 serves as a coordination point for (R)-pantoate. Residues Val-176 and 184-187 (LSSR) contribute to the ATP site.

Belongs to the pantothenate synthetase family. As to quaternary structure, homodimer.

It localises to the cytoplasm. The catalysed reaction is (R)-pantoate + beta-alanine + ATP = (R)-pantothenate + AMP + diphosphate + H(+). It functions in the pathway cofactor biosynthesis; (R)-pantothenate biosynthesis; (R)-pantothenate from (R)-pantoate and beta-alanine: step 1/1. Functionally, catalyzes the condensation of pantoate with beta-alanine in an ATP-dependent reaction via a pantoyl-adenylate intermediate. This chain is Pantothenate synthetase, found in Bacteroides thetaiotaomicron (strain ATCC 29148 / DSM 2079 / JCM 5827 / CCUG 10774 / NCTC 10582 / VPI-5482 / E50).